The following is a 179-amino-acid chain: Ribosomal-protein-serine acetyltransferase (179 aa).

Residues 11–172 (LELHAVAENH…NDAYDDVNLY (162 aa)) enclose the N-acetyltransferase domain.

It belongs to the acetyltransferase family. RimL subfamily.

The protein resides in the cytoplasm. It catalyses the reaction N-terminal L-seryl-[ribosomal protein bL12] + acetyl-CoA = N-terminal N(alpha)-acetyl-L-seryl-[ribosomal protein bL12] + CoA + H(+). This enzyme acetylates the N-terminal serine of ribosomal protein bL12, converting it into the acetylated form of bL12 known as bL7. The sequence is that of Ribosomal-protein-serine acetyltransferase from Escherichia coli (strain K12).